Consider the following 723-residue polypeptide: RNA polymerase II subunit A C-terminal domain phosphatase (723 aa).

Residues 160–341 (RQEKRLSLIV…STPLPEQEQL (182 aa)) enclose the FCP1 homology domain. Active-site residues include aspartate 170 and aspartate 172. Residues 345 to 380 (EIPKDEPDSVDEINEENEETPEYDSSNSSYAQDSST) form a disordered region. Over residues 352–366 (DSVDEINEENEETPE) the composition is skewed to acidic residues. The segment covering 367–379 (YDSSNSSYAQDSS) has biased composition (low complexity). The 94-residue stretch at 486–579 (MKQKVLKGCR…KRLPESDYLL (94 aa)) folds into the BRCT domain. A disordered region spans residues 631–723 (DLSDDNDFDT…MEAELSKDTA (93 aa)). A compositionally biased stretch (polar residues) spans 639-650 (DTGSISASQSQP). Residues 673 to 687 (DGEKRRKENDNHEGY) are compositionally biased toward basic and acidic residues. Positions 700 to 715 (SAENENELDDLADIME) are enriched in acidic residues.

Monomer. Requires Mg(2+) as cofactor. The cofactor is Mn(2+). It depends on Co(2+) as a cofactor.

Its subcellular location is the nucleus. It carries out the reaction O-phospho-L-seryl-[protein] + H2O = L-seryl-[protein] + phosphate. The enzyme catalyses O-phospho-L-threonyl-[protein] + H2O = L-threonyl-[protein] + phosphate. Functionally, processively dephosphorylates 'Ser-2' and 'Ser-5' of the heptad repeats YSPTSPS in the C-terminal domain of the largest RNA polymerase II subunit. This promotes the activity of RNA polymerase II. In Schizosaccharomyces pombe (strain 972 / ATCC 24843) (Fission yeast), this protein is RNA polymerase II subunit A C-terminal domain phosphatase (fcp1).